The following is a 328-amino-acid chain: Glucokinase (328 aa).

16–21 provides a ligand contact to ATP; that stretch reads ADIGGT.

It belongs to the bacterial glucokinase family.

Its subcellular location is the cytoplasm. The catalysed reaction is D-glucose + ATP = D-glucose 6-phosphate + ADP + H(+). The polypeptide is Glucokinase (Neisseria meningitidis serogroup C (strain 053442)).